A 144-amino-acid polypeptide reads, in one-letter code: Ribosome-binding factor A (144 aa).

Residues 120-144 are disordered; sequence DKRRMAESGREEDDAAPDETTEDNA. Residues 129 to 144 show a composition bias toward acidic residues; sequence REEDDAAPDETTEDNA.

It belongs to the RbfA family. Monomer. Binds 30S ribosomal subunits, but not 50S ribosomal subunits or 70S ribosomes.

The protein localises to the cytoplasm. Its function is as follows. One of several proteins that assist in the late maturation steps of the functional core of the 30S ribosomal subunit. Associates with free 30S ribosomal subunits (but not with 30S subunits that are part of 70S ribosomes or polysomes). Required for efficient processing of 16S rRNA. May interact with the 5'-terminal helix region of 16S rRNA. This is Ribosome-binding factor A from Aeromonas hydrophila subsp. hydrophila (strain ATCC 7966 / DSM 30187 / BCRC 13018 / CCUG 14551 / JCM 1027 / KCTC 2358 / NCIMB 9240 / NCTC 8049).